The primary structure comprises 282 residues: 4-diphosphocytidyl-2-C-methyl-D-erythritol kinase (282 aa).

The active site involves Lys8. 91–101 (PVAAGLAGGST) lines the ATP pocket. The active site involves Asp133.

The protein belongs to the GHMP kinase family. IspE subfamily.

It carries out the reaction 4-CDP-2-C-methyl-D-erythritol + ATP = 4-CDP-2-C-methyl-D-erythritol 2-phosphate + ADP + H(+). It participates in isoprenoid biosynthesis; isopentenyl diphosphate biosynthesis via DXP pathway; isopentenyl diphosphate from 1-deoxy-D-xylulose 5-phosphate: step 3/6. Functionally, catalyzes the phosphorylation of the position 2 hydroxy group of 4-diphosphocytidyl-2C-methyl-D-erythritol. The polypeptide is 4-diphosphocytidyl-2-C-methyl-D-erythritol kinase (Symbiobacterium thermophilum (strain DSM 24528 / JCM 14929 / IAM 14863 / T)).